The following is a 213-amino-acid chain: Redox-sensing transcriptional repressor Rex (213 aa).

Positions 18–57 form a DNA-binding region, H-T-H motif; it reads LYYRFLKNLHASGKQRVSSAELSEAVKVDPATIRRDFSYF. 92–97 contacts NAD(+); it reads GVGNLG.

It belongs to the transcriptional regulatory Rex family. Homodimer.

The protein localises to the cytoplasm. Modulates transcription in response to changes in cellular NADH/NAD(+) redox state. The protein is Redox-sensing transcriptional repressor Rex of Geobacillus kaustophilus (strain HTA426).